Consider the following 409-residue polypeptide: Arginine deiminase (409 aa).

Residue cysteine 397 is the Amidino-cysteine intermediate of the active site.

This sequence belongs to the arginine deiminase family.

The protein localises to the cytoplasm. It carries out the reaction L-arginine + H2O = L-citrulline + NH4(+). It functions in the pathway amino-acid degradation; L-arginine degradation via ADI pathway; carbamoyl phosphate from L-arginine: step 1/2. This chain is Arginine deiminase (arcA), found in Metamycoplasma hominis (Mycoplasma hominis).